Consider the following 117-residue polypeptide: Carboxysome shell protein CcmK4 (117 aa).

Residues 5 to 91 (AVGSLETKGF…PHENVECVLP (87 aa)) enclose the BMC domain.

It belongs to the bacterial microcompartments protein family. CcmK subfamily. In terms of assembly, crystallizes as a homohexamer. Interacts stably with CcmK3, forming heterohexamers that can make dodecamers. Heterohexamers have a 1:2 CcmK3:CcmK4 stoichiometry. Upon expression in E.coli forms large aggregates.

It localises to the carboxysome. Functionally, a probably essential, minor shell protein of the carboxysome, a polyhedral inclusion where RuBisCO (ribulose bisphosphate carboxylase, rbcL-rbcS) is sequestered. Hexamers form sheets that form the facets of the polyhedral carboxysome. In PCC 7418 there are several CcmK paralogs with presumably functional differences. This subunit can probably make both homohexamers and heterohexamers with CcmK3. Both hexamers can also make dodecamers, formation depends on buffer conditions. The protein is Carboxysome shell protein CcmK4 of Halothece sp. (strain PCC 7418) (Synechococcus sp. (strain PCC 7418)).